A 507-amino-acid polypeptide reads, in one-letter code: ATP synthase subunit alpha, chloroplastic (507 aa).

170–177 is an ATP binding site; the sequence is GDRQTGKT.

This sequence belongs to the ATPase alpha/beta chains family. As to quaternary structure, F-type ATPases have 2 components, CF(1) - the catalytic core - and CF(0) - the membrane proton channel. CF(1) has five subunits: alpha(3), beta(3), gamma(1), delta(1), epsilon(1). CF(0) has four main subunits: a, b, b' and c.

Its subcellular location is the plastid. The protein localises to the chloroplast thylakoid membrane. It carries out the reaction ATP + H2O + 4 H(+)(in) = ADP + phosphate + 5 H(+)(out). Produces ATP from ADP in the presence of a proton gradient across the membrane. The alpha chain is a regulatory subunit. The chain is ATP synthase subunit alpha, chloroplastic from Nandina domestica (Heavenly bamboo).